Reading from the N-terminus, the 380-residue chain is Cytochrome b (380 aa).

The next 4 helical transmembrane spans lie at 34-54 (FGSLLGICLMTQILTGLLLAM), 78-99 (WLIRNLHANGASFFFICIYLHI), 114-134 (WNTGIILLLTLMATAFVGYVL), and 179-199 (FFALHFLLPFAIAGLTLIHLT). Heme b contacts are provided by H84 and H98. Heme b is bound by residues H183 and H197. Position 202 (H202) interacts with a ubiquinone. 4 helical membrane-spanning segments follow: residues 227-247 (LKDILGFTLMFLPLTSLALFS), 289-309 (LGGVLALAASVLVLFLSPFLH), 321-341 (LSQLLFWILVTNLFILTWVGS), and 348-368 (FIIIGQLASVTYFTILLILFP).

It belongs to the cytochrome b family. As to quaternary structure, the cytochrome bc1 complex contains 11 subunits: 3 respiratory subunits (MT-CYB, CYC1 and UQCRFS1), 2 core proteins (UQCRC1 and UQCRC2) and 6 low-molecular weight proteins (UQCRH/QCR6, UQCRB/QCR7, UQCRQ/QCR8, UQCR10/QCR9, UQCR11/QCR10 and a cleavage product of UQCRFS1). This cytochrome bc1 complex then forms a dimer. Heme b serves as cofactor.

The protein resides in the mitochondrion inner membrane. Its function is as follows. Component of the ubiquinol-cytochrome c reductase complex (complex III or cytochrome b-c1 complex) that is part of the mitochondrial respiratory chain. The b-c1 complex mediates electron transfer from ubiquinol to cytochrome c. Contributes to the generation of a proton gradient across the mitochondrial membrane that is then used for ATP synthesis. The protein is Cytochrome b (MT-CYB) of Thalassoica antarctica (Antarctic petrel).